The primary structure comprises 381 residues: Tryptophan--tRNA ligase (381 aa).

A 'HIGH' region motif is present at residues 82–90 (PSLGMHIGH). The 'KMSKS' region motif lies at 254-258 (KMSSS).

The protein belongs to the class-I aminoacyl-tRNA synthetase family.

It localises to the cytoplasm. It catalyses the reaction tRNA(Trp) + L-tryptophan + ATP = L-tryptophyl-tRNA(Trp) + AMP + diphosphate + H(+). The polypeptide is Tryptophan--tRNA ligase (Sulfurisphaera tokodaii (strain DSM 16993 / JCM 10545 / NBRC 100140 / 7) (Sulfolobus tokodaii)).